We begin with the raw amino-acid sequence, 743 residues long: Merozoite surface protein 9 (743 aa).

The signal sequence occupies residues 1 to 23 (MMNMKIVLFSLLLFVIRWNIISC). The tract at residues 77–235 (KELLKEKQYT…VNDEDDVNDE (159 aa)) is interaction with MSP1 and host SLC4A1/Band 3. 4 disordered regions span residues 202-282 (KSQG…ATAY), 459-487 (DNQAVDTKSMEEPKVKAQPALRGVEPTED), 512-540 (NNTPNVVPPTQSKKKNKNETVSGMDENFD), and 666-743 (VDAL…EESK). Over residues 211 to 224 (SQNQNENNDNQKYQ) the composition is skewed to polar residues. Repeat copies occupy residues 226–231 (VNDEDD), 232–237 (VNDEED), 238–243 (TNDDED), 244–249 (TNDEED), 250–255 (TNDDED), 256–261 (TNDDED), 262–267 (TNDEED), and 268–273 (TNDEED). Residues 226–273 (VNDEDDVNDEEDTNDDEDTNDEEDTNDDEDTNDDEDTNDEEDTNDEED) are 8 X 6 AA tandem repeats of [VT]-N-D-[ED]-[ED]-D. Acidic residues predominate over residues 226–274 (VNDEDDVNDEEDTNDDEDTNDEEDTNDDEDTNDDEDTNDEEDTNDEEDH). The interval 364 to 528 (LKDNLINYEF…PPTQSKKKNK (165 aa)) is interaction with MSP1 and host SLC4A1/Band 3. Residues 459–473 (DNQAVDTKSMEEPKV) are compositionally biased toward basic and acidic residues. Over residues 512–521 (NNTPNVVPPT) the composition is skewed to low complexity. Positions 644–733 (NQETEEEMEK…QEEEEEEEIV (90 aa)) form a coiled coil. Residues 672–721 (KNKEEEEKEKEKEEKEKEEKEKEKEEKEKEEKEKEEKEKEEKEEEKKEKE) are compositionally biased toward basic and acidic residues. The span at 722-733 (EEQEEEEEEEIV) shows a compositional bias: acidic residues.

The protein belongs to the plasmodium ABRA family. As to quaternary structure, forms a complex composed of MSP1, MSP6, MSP7, MSP9 and MSP3; within the complex, MSP6 and MSP9 mediate the binding to the host erythrocyte. Interacts with MSP1 subunits p19 and p42; the interaction is direct. Interacts with host SLC4A1/Band 3 protein (via the 5ABC region). MSP1 subunits p19 or p42, and MSP9 form a co-ligand complex that interacts with host SLC4A1/Band 3 protein. In terms of processing, not glycosylated.

It localises to the cell membrane. The protein resides in the parasitophorous vacuole lumen. Its subcellular location is the secreted. Functionally, during the asexual blood stage, involved in the sialic acid-independent (SAID) merozoite invasion of host erythrocytes by binding to host SLC4A1/Band 3 protein on the surface of the host erythrocyte. This chain is Merozoite surface protein 9, found in Plasmodium falciparum (isolate 3D7).